A 239-amino-acid polypeptide reads, in one-letter code: VIGGQECARDSHPWQAAVYYYSDIKCGGVLVDPQWVLTAAHCINDSNQVKLGRHNLFEDEDTAQHFLVSQSVPHPDFNMSLLEPHNVLPNEDYSHDLMLLRLNQPAQITDSVQVMPLPTQEVQVGTTCRALGWGSIDPDPAHPVFPDELQCVGLEILPSKNCDDAHIANVTGTMLCAGDLAGGKDTCVGDSGGPLICDGVLQGLTSWGDSPCGVAHSPSLYTKVIEYREWIERTMADNP.

The Peptidase S1 domain maps to 1–236 (VIGGQECARD…YREWIERTMA (236 aa)). Cystine bridges form between C7-C151, C26-C42, C128-C197, C162-C176, and C187-C212. The Charge relay system role is filled by H41. N78 carries N-linked (GlcNAc...) asparagine glycosylation. Catalysis depends on D96, which acts as the Charge relay system. N-linked (GlcNAc...) asparagine glycosylation occurs at N169. The active-site Charge relay system is the S191.

It belongs to the peptidase S1 family. Kallikrein subfamily.

It catalyses the reaction Preferential cleavage of Arg-|-Xaa bonds in small molecule substrates. Highly selective action to release kallidin (lysyl-bradykinin) from kininogen involves hydrolysis of Met-|-Xaa or Leu-|-Xaa.. In terms of biological role, glandular kallikreins cleave Met-Lys and Arg-Ser bonds in kininogen to release Lys-bradykinin. The polypeptide is Glandular kallikrein, prostatic (Cavia porcellus (Guinea pig)).